The primary structure comprises 349 residues: UDP-galactose/UDP-glucose transporter 4 (349 aa).

8 consecutive transmembrane segments (helical) span residues 23–43 (WQQF…NGIC), 56–76 (GWYF…MYGF), 115–135 (IMFK…IPGL), 140–160 (PVHE…FTLA), 167–187 (NFSI…AFLG), 205–225 (MLFC…ILTG), 248–268 (AMAT…FGAA), and 293–313 (LTEQ…LKMV). Positions 316–349 (PNPNPKSSGSGQTPGKLERVKFEKEDDEESRPLV) are disordered. Acidic residues predominate over residues 340 to 349 (EDDEESRPLV).

This sequence belongs to the nucleotide-sugar transporter family. UDP-galactose:UMP antiporter (TC 2.A.7.11) subfamily.

The protein resides in the membrane. Its function is as follows. Sugar transporter involved in the transport of nucleotide-sugars from cytoplasm into the Golgi and/or the endoplasmic reticulum. This chain is UDP-galactose/UDP-glucose transporter 4, found in Arabidopsis thaliana (Mouse-ear cress).